A 399-amino-acid polypeptide reads, in one-letter code: Tyrosine--tRNA ligase (399 aa).

A 'HIGH' region motif is present at residues 42–51; sequence PTAPDIHLGH. The 'KMSKS' region signature appears at 226–230; sequence KMSKS. Lys-229 is an ATP binding site. One can recognise an S4 RNA-binding domain in the interval 337-398; sequence LTIGYILQRA…GKRRFAKVKV (62 aa).

Belongs to the class-I aminoacyl-tRNA synthetase family. TyrS type 2 subfamily. In terms of assembly, homodimer.

It is found in the cytoplasm. It carries out the reaction tRNA(Tyr) + L-tyrosine + ATP = L-tyrosyl-tRNA(Tyr) + AMP + diphosphate + H(+). Its function is as follows. Catalyzes the attachment of tyrosine to tRNA(Tyr) in a two-step reaction: tyrosine is first activated by ATP to form Tyr-AMP and then transferred to the acceptor end of tRNA(Tyr). The polypeptide is Tyrosine--tRNA ligase (Coxiella burnetii (strain RSA 493 / Nine Mile phase I)).